The sequence spans 469 residues: MKPVIALIGRPNVGKSTLFNQITKSRDALVADFAGLTRDRKYGDATYQNKSFIVVDTGGIGESEGGIDNYMAEQSKTAINEADIIIFVVDARAGLLASDEQIARELRTLGKKIYLVANKVDGVHAEAALVEFYKLGLGEPLQVAASHGRGVQQMLEDVLQDIPEDENPEEHDKDTGLRLAIIGRPNVGKSTLVNRLLGEDRVVAFDQPGTTRDSIYIPFEREGRKYTLIDTAGVRRKGKVDEMIEKFSIVKTLQAMKDAHVVVVVVDAREGIVEQDLHLIGYALEAGRAMVIAINKWDNMSEYDRKQCKLDVERRFDFIPWARIHLISALHGTGVGELYPSIHRAYESANLKVSPAKLTQILNDATDQHQPPTVQGRRIKMRYAHMGGQNPPTIVIHGNKVDKTPADYRRYLENVFRKVYKLEGTPVKIEFKTSENPFEGRKSQVDERTAARRRRYIQKFKKAEKKFKR.

2 consecutive EngA-type G domains span residues 3-166 (PVIA…PEDE) and 177-350 (LRLA…ESAN). Residues 9-16 (GRPNVGKS), 56-60 (DTGGI), 118-121 (NKVD), 183-190 (GRPNVGKS), 230-234 (DTAGV), and 295-298 (NKWD) contribute to the GTP site. One can recognise a KH-like domain in the interval 351 to 435 (LKVSPAKLTQ…PVKIEFKTSE (85 aa)).

This sequence belongs to the TRAFAC class TrmE-Era-EngA-EngB-Septin-like GTPase superfamily. EngA (Der) GTPase family. Associates with the 50S ribosomal subunit.

GTPase that plays an essential role in the late steps of ribosome biogenesis. The chain is GTPase Der from Acinetobacter baumannii (strain SDF).